The primary structure comprises 359 residues: MMIGESHRGFNPTVHIPPWPLSEDLTVSDIYGSPDGGSSMMEALAELQRYLPSNEPDPDSDPDLSGPDSPIDAYTCDHFRMYEFKVRRCARGRSHDWTECPYAHPGEKARRRDPRKFHYSGTACPEFRKGCCKRGDACEFSHGVFECWLHPARYRTQPCKDGGNCRRRVCFFAHSPDQIRVLPNQSPDRVDSFDVLSPTIRRAFQFSISPSSNSPPVSPRGDSDSSCSLLSRSLGSNLGNDVVASLRNLQLNKVKSSLSSSYNNQIGGYGSGFGSPRGSVLGPGFRSLPTTPTRPGFMNIWENGLEEEPAMERVESGRELRAQLFEKLSKENCMGRIEPDPDQGAGDTPDVGWVSDLVM.

3 consecutive C3H1-type zinc fingers follow at residues 75-107, 119-145, and 153-177; these read TCDH…HPGE, YSGT…HGVF, and RYRT…HSPD. Disordered regions lie at residues 207–226 and 334–359; these read SISP…SDSS and MGRI…DLVM.

This chain is Zinc finger CCCH domain-containing protein 20, found in Arabidopsis thaliana (Mouse-ear cress).